The sequence spans 340 residues: Probable peroxidase 61 (340 aa).

An N-terminal signal peptide occupies residues 1 to 25 (MQFVNFFPLLALVVISLAGKATVEA). 4 disulfides stabilise this stretch: Cys46-Cys122, Cys79-Cys84, Cys128-Cys331, and Cys205-Cys237. N-linked (GlcNAc...) asparagine glycosylation occurs at Asn63. Arg73 is a catalytic residue. Residues Asp78, Val81, Gly83, Asp85, and Ser87 each coordinate Ca(2+). Pro168 is a binding site for substrate. A heme b-binding site is contributed by His198. Position 199 (Ser199) interacts with Ca(2+). Asn226 carries N-linked (GlcNAc...) asparagine glycosylation. Residues Asp255 and Ser258 each contribute to the Ca(2+) site.

Belongs to the peroxidase family. Classical plant (class III) peroxidase subfamily. The cofactor is heme b. Ca(2+) serves as cofactor.

It is found in the secreted. The enzyme catalyses 2 a phenolic donor + H2O2 = 2 a phenolic radical donor + 2 H2O. In terms of biological role, removal of H(2)O(2), oxidation of toxic reductants, biosynthesis and degradation of lignin, suberization, auxin catabolism, response to environmental stresses such as wounding, pathogen attack and oxidative stress. The enzyme activity has to be proved. This Arabidopsis thaliana (Mouse-ear cress) protein is Probable peroxidase 61 (PER61).